The primary structure comprises 4092 residues: Dynein heavy chain, cytoplasmic (4092 aa).

The tract at residues 1-1757 (MCKNEARLAN…FISQSGYLLQ (1757 aa)) is stem. 6 coiled-coil regions span residues 154–175 (VETIDKTRRKLDDISKQFQQLH), 486–508 (KLEQAESEFSKNMLDLEKKLQNT), 542–566 (KVLENQQILLLEIKKDIRQLETGLE), 932–959 (VIKLKDDIQNCIEQVQNLHCKINSYVKE), 1042–1063 (YERDARKLHEDMNRDREAVEDM), and 1681–1705 (KGLLDKLNKSSDNVKKKIEALLVEY). 4 AAA regions span residues 1758-1979 (YKFE…VLRN), 2036-2273 (QCLK…NDLV), 2379-2628 (SLEA…LVRG), and 2722-2984 (TFCD…KVGV). ATP contacts are provided by residues 1796–1803 (GPAGTGKT), 2074–2081 (GKAGCGKT), 2418–2425 (GPPGSGKT), and 2760–2767 (GASRTGKT). Coiled coils occupy residues 2993-3092 (IDGL…KRKE), 3242-3300 (KTKA…KSLT), and 3532-3608 (ITLT…EEFF). A stalk region spans residues 2993–3300 (IDGLRALVKL…RSISLVKSLT (308 aa)). AAA stretches follow at residues 3370–3599 (LVTL…NIEK) and 3760–3970 (LNWF…YLEN).

Belongs to the dynein heavy chain family. As to quaternary structure, the dynein complex consists of at least two heavy chains and a number of intermediate and light chains. Interacts with DYN3.

It localises to the cytoplasm. The protein localises to the cytoskeleton. Its function is as follows. Cytoplasmic dynein acts as a motor for the intracellular retrograde motility of vesicles and organelles along microtubules. Dynein has ATPase activity; the force-producing power stroke is thought to occur on release of ADP. Required to maintain uniform nuclear distribution in hyphae. May play an important role in the proper orientation of the mitotic spindle into the budding daughter cell yeast. Probably required for normal progression of the cell cycle. This Saccharomyces cerevisiae (strain ATCC 204508 / S288c) (Baker's yeast) protein is Dynein heavy chain, cytoplasmic (DYN1).